We begin with the raw amino-acid sequence, 283 residues long: Cuticle collagen 49 (283 aa).

The first 19 residues, 1–19 (MWKFVIGSVSTAAFFVSVC), serve as a signal peptide directing secretion. The tract at residues 90–283 (EPTKNCPAGP…GYCTCPPRTA (194 aa)) is disordered. Residues 127 to 139 (VVIHDMPNPKECI) show a composition bias toward basic and acidic residues. The segment covering 143-155 (AGPPGPPGPPGPL) has biased composition (pro residues). A compositionally biased stretch (low complexity) spans 185–204 (QGPPGSAGRAGPRGQAGQPG). The Collagen-like domain maps to 213 to 271 (GRPGPQGPLGEPGAQGEPGVDGKDGALGAPGRKAENGRPGKRGKDGVAGVPGTRGKEGE). Over residues 244 to 257 (RKAENGRPGKRGKD) the composition is skewed to basic and acidic residues.

The protein belongs to the cuticular collagen family. In terms of assembly, collagen polypeptide chains are complexed within the cuticle by disulfide bonds and other types of covalent cross-links.

Its function is as follows. Probable cuticular collagen-like protein. Nematode cuticles are composed largely of collagen-like proteins. The cuticle functions both as an exoskeleton and as a barrier to protect the worm from its environment. Acts downstream of the Wnt signaling pathway, perhaps in the formation of the adult cuticle. This chain is Cuticle collagen 49, found in Caenorhabditis elegans.